The chain runs to 192 residues: Flavin prenyltransferase UbiX (192 aa).

FMN is bound by residues 10–12 (GAS), Ser36, 92–95 (SVAT), and Arg127. Tyr157 and Lys173 together coordinate dimethylallyl phosphate.

The protein belongs to the UbiX/PAD1 family.

The enzyme catalyses dimethylallyl phosphate + FMNH2 = prenylated FMNH2 + phosphate. Flavin prenyltransferase that catalyzes the synthesis of the prenylated FMN cofactor (prenyl-FMN) for 4-hydroxy-3-polyprenylbenzoic acid decarboxylase UbiD. The prenyltransferase is metal-independent and links a dimethylallyl moiety from dimethylallyl monophosphate (DMAP) to the flavin N5 and C6 atoms of FMN. The sequence is that of Flavin prenyltransferase UbiX from Chlamydia trachomatis serovar D (strain ATCC VR-885 / DSM 19411 / UW-3/Cx).